The primary structure comprises 617 residues: Acyl-CoA dehydrogenase family member 11 (617 aa).

The segment at 1-47 (MHRIGNAVRMASSSSANATITARHTQYSHAKTGGFSQTGPTLHNPYK) is disordered. Over residues 11-22 (ASSSSANATITA) the composition is skewed to low complexity. Residues 23-41 (RHTQYSHAKTGGFSQTGPT) are compositionally biased toward polar residues. Residues 206–215 (QWMTEKKGGS) and 241–243 (FSS) each bind FAD. Position 215 (Ser-215) interacts with substrate. Ser-267 and Arg-334 together coordinate substrate. FAD contacts are provided by residues Arg-359, 366 to 369 (QSKW), Glu-437, Gly-441, and 464 to 466 (EGT).

The protein belongs to the acyl-CoA dehydrogenase family. As to quaternary structure, homotetramer; dimer of dimers.

Its function is as follows. Promotes adaption to elevated temperatures by regulating expression of the lipid desaturase, fat-7. Binds selectively and with high affinity to fatty acids with chain lengths from C10 to C12 and prevents them from activating fat-7 expression mediated by the nuclear hormone receptor nhr-49, leading to low levels of membrane lipid desaturation and membrane fluidity for adaption to heat. The polypeptide is Acyl-CoA dehydrogenase family member 11 (Caenorhabditis elegans).